Consider the following 253-residue polypeptide: 5'/3'-nucleotidase SurE (253 aa).

Positions 8, 9, 39, and 92 each coordinate a divalent metal cation.

Belongs to the SurE nucleotidase family. Requires a divalent metal cation as cofactor.

It is found in the cytoplasm. The catalysed reaction is a ribonucleoside 5'-phosphate + H2O = a ribonucleoside + phosphate. The enzyme catalyses a ribonucleoside 3'-phosphate + H2O = a ribonucleoside + phosphate. It carries out the reaction [phosphate](n) + H2O = [phosphate](n-1) + phosphate + H(+). Functionally, nucleotidase with a broad substrate specificity as it can dephosphorylate various ribo- and deoxyribonucleoside 5'-monophosphates and ribonucleoside 3'-monophosphates with highest affinity to 3'-AMP. Also hydrolyzes polyphosphate (exopolyphosphatase activity) with the preference for short-chain-length substrates (P20-25). Might be involved in the regulation of dNTP and NTP pools, and in the turnover of 3'-mononucleotides produced by numerous intracellular RNases (T1, T2, and F) during the degradation of various RNAs. This is 5'/3'-nucleotidase SurE from Enterobacter sp. (strain 638).